We begin with the raw amino-acid sequence, 127 residues long: Glycine cleavage system H protein (127 aa).

In terms of domain architecture, Lipoyl-binding spans 24–105 (TALVGITDFA…YGSGWMVKMK (82 aa)). Residue Lys-65 is modified to N6-lipoyllysine.

Belongs to the GcvH family. The glycine cleavage system is composed of four proteins: P, T, L and H. (R)-lipoate is required as a cofactor.

Functionally, the glycine cleavage system catalyzes the degradation of glycine. The H protein shuttles the methylamine group of glycine from the P protein to the T protein. This is Glycine cleavage system H protein from Chlorobium luteolum (strain DSM 273 / BCRC 81028 / 2530) (Pelodictyon luteolum).